Consider the following 352-residue polypeptide: Probable RNA methyltransferase CV_2253 (352 aa).

Residue Glu91 is the Proton acceptor of the active site. The 227-residue stretch at 94 to 320 folds into the Radical SAM core domain; the sequence is LLPRDGLCVS…TKVRDSAGQD (227 aa). The cysteines at positions 101 and 325 are disulfide-linked. Cys108, Cys112, and Cys115 together coordinate [4Fe-4S] cluster. Residues 153 to 154, Ser183, 206 to 208, and Asn282 contribute to the S-adenosyl-L-methionine site; these read GE and SLH. Cys325 (S-methylcysteine intermediate) is an active-site residue.

This sequence belongs to the radical SAM superfamily. RlmN family. It depends on [4Fe-4S] cluster as a cofactor.

It is found in the cytoplasm. The polypeptide is Probable RNA methyltransferase CV_2253 (Chromobacterium violaceum (strain ATCC 12472 / DSM 30191 / JCM 1249 / CCUG 213 / NBRC 12614 / NCIMB 9131 / NCTC 9757 / MK)).